A 302-amino-acid chain; its full sequence is Thioredoxin-like protein CDSP32, chloroplastic (302 aa).

The transit peptide at Met-1–Lys-56 directs the protein to the chloroplast. Positions His-163–Val-298 constitute a Thioredoxin domain. Active-site nucleophile residues include Cys-219 and Cys-222. Cys-219 and Cys-222 are joined by a disulfide.

It belongs to the thioredoxin family. In terms of assembly, interacts with the plastidial peroxiredoxin BAS1.

It localises to the plastid. It is found in the chloroplast stroma. Probable thiol-disulfide oxidoreductase involved in resistance to oxidative stress. May participate in the reduction of alkyl hydroperoxides derived from oxidative stress by acting as a physiological electron donor to the BAS1 peroxiredoxin. May regenerate methionine sulfoxide reductase B1 (MSRB1) activity through sulfenic acid reduction. The protein is Thioredoxin-like protein CDSP32, chloroplastic (CDSP32) of Arabidopsis thaliana (Mouse-ear cress).